A 95-amino-acid polypeptide reads, in one-letter code: Lipolysis-activating peptide 1-beta chain (95 aa).

Positions 1–22 are cleaved as a signal peptide; that stretch reads MISVQVIFIAFISIIAFSMVCG. One can recognise an LCN-type CS-alpha/beta domain in the interval 23-91; that stretch reads GNVFPNRELG…FLNALEKQCP (69 aa). 3 cysteine pairs are disulfide-bonded: Cys-37/Cys-60, Cys-45/Cys-70, and Cys-49/Cys-72.

Homodimer; disulfide-linked or monomer (edited version) or heterodimer of an alpha chain (AC P84810) and this beta chain (non-edited version). In terms of tissue distribution, expressed by the venom gland.

The protein resides in the secreted. In terms of biological role, the homodimer inhibits HMG-CoA reductase (HMGCR) (32% of inhibition produced by 0.6 uM), a glycoprotein involved in the control of cholesterol biosynthesis. The inhibitory effects of bumarsin are seen at much lower concentrations (0.6 uM) than that for statins such as atorvastatin (5 mM) and simvastatin (10 uM). In addition to inhibition of HMG-CoA reductase, this protein lowers cholesterol levels by inducing steroid hormone synthesis via StAR, and by increasing reverse cholesterol transport mediated by the induction of ABCA1 and APOA1. Its function is as follows. The heterodimer non-edited LVP1 induces lipolysis in rat adipocytes. Induction of lipolysis by LVP1 appears to be mediated through the beta-2 adrenergic receptor pathway (ADRB2). Intracerebroventricular injection is not toxic to mice. The monomer edited version, similar to alpha-toxins, may modulate voltage-gated sodium channels (Nav) and may block voltage-gated potassium channels (Kv). The chain is Lipolysis-activating peptide 1-beta chain from Buthus occitanus tunetanus (Common European scorpion).